The primary structure comprises 820 residues: SART-1 family protein DOT2 (820 aa).

Basic and acidic residues-rich tracts occupy residues 1-156 (MEVE…DNRG), 210-219 (EEKRNAEKQR), and 426-445 (LGSRKDGRRQAMKEEKERIE). Disordered stretches follow at residues 1 to 177 (MEVE…SALD), 210 to 248 (EEKRNAEKQRAQQLSRIFEEQDNLNQGENEDGEDGEHLS), 420 to 445 (GLGAEDLGSRKDGRRQAMKEEKERIE), 523 to 544 (SSTNQTTDDNTTTGDETQENTV), 564 to 617 (KPES…PDEN), 657 to 678 (KLVGIVDDDGGKESKDKESKDR), 729 to 748 (KLKQMKNSDTPSQSVQRMRE), and 762 to 820 (GHVK…RPKP). Ser-22 is modified (phosphoserine). Coiled coils occupy residues 58–120 (RDKE…EKEK), 171–235 (KEAS…NLNQ), and 433–510 (RRQA…KEEA). The segment covering 525-543 (TNQTTDDNTTTGDETQENT) has biased composition (low complexity). Residues 582–591 (VEVKEEHPDG) show a composition bias toward basic and acidic residues. Residues 596-606 (NDTDMDAAEDS) are compositionally biased toward acidic residues. 2 stretches are compositionally biased toward basic and acidic residues: residues 607 to 617 (SDTKEITPDEN) and 665 to 678 (DGGKESKDKESKDR). Composition is skewed to polar residues over residues 733–744 (MKNSDTPSQSVQ) and 767–776 (GQTSDPQSGF). A compositionally biased stretch (basic and acidic residues) spans 792–807 (GDRKVEHFLGIKRKSE).

This sequence belongs to the SNU66/SART1 family. In terms of tissue distribution, expressed in lateral root cap, columella, meristem and quiescent center (QC). Expressed in young leaves.

The protein localises to the nucleus. Functionally, plays a role in root, shoot and flower development. Probably required for normal root and shoot meristem organization and maintenance and the proper expression of PIN and PLT genes. Involved in leaf vasculature patterning. The protein is SART-1 family protein DOT2 of Arabidopsis thaliana (Mouse-ear cress).